The primary structure comprises 658 residues: UvrABC system protein B (658 aa).

The 388-residue stretch at 26–413 (EGINSGKKKQ…SPEVIEQIIR (388 aa)) folds into the Helicase ATP-binding domain. Residue 39 to 46 (GATGTGKT) coordinates ATP. A Beta-hairpin motif is present at residues 92–115 (YYDYYQPEAYVPQTDTFIEKDAQI). The region spanning 430–596 (QIDDLLGEIQ…TIQKGVRDVI (167 aa)) is the Helicase C-terminal domain. The region spanning 622 to 657 (EKTIAKMEAEMKEAAKALDFERAAELRDLLLELKAE) is the UVR domain.

Belongs to the UvrB family. Forms a heterotetramer with UvrA during the search for lesions. Interacts with UvrC in an incision complex.

Its subcellular location is the cytoplasm. Functionally, the UvrABC repair system catalyzes the recognition and processing of DNA lesions. A damage recognition complex composed of 2 UvrA and 2 UvrB subunits scans DNA for abnormalities. Upon binding of the UvrA(2)B(2) complex to a putative damaged site, the DNA wraps around one UvrB monomer. DNA wrap is dependent on ATP binding by UvrB and probably causes local melting of the DNA helix, facilitating insertion of UvrB beta-hairpin between the DNA strands. Then UvrB probes one DNA strand for the presence of a lesion. If a lesion is found the UvrA subunits dissociate and the UvrB-DNA preincision complex is formed. This complex is subsequently bound by UvrC and the second UvrB is released. If no lesion is found, the DNA wraps around the other UvrB subunit that will check the other stand for damage. This Bacillus cereus (strain ATCC 10987 / NRS 248) protein is UvrABC system protein B.